The sequence spans 277 residues: 3-methyl-2-oxobutanoate hydroxymethyltransferase (277 aa).

The Mg(2+) site is built by aspartate 53 and aspartate 96. 3-methyl-2-oxobutanoate-binding positions include 53–54, aspartate 96, and lysine 126; that span reads DS. Glutamate 128 contributes to the Mg(2+) binding site. The active-site Proton acceptor is glutamate 195.

The protein belongs to the PanB family. As to quaternary structure, homodecamer; pentamer of dimers. Requires Mg(2+) as cofactor.

The protein localises to the cytoplasm. It catalyses the reaction 3-methyl-2-oxobutanoate + (6R)-5,10-methylene-5,6,7,8-tetrahydrofolate + H2O = 2-dehydropantoate + (6S)-5,6,7,8-tetrahydrofolate. It participates in cofactor biosynthesis; (R)-pantothenate biosynthesis; (R)-pantoate from 3-methyl-2-oxobutanoate: step 1/2. Its function is as follows. Catalyzes the reversible reaction in which hydroxymethyl group from 5,10-methylenetetrahydrofolate is transferred onto alpha-ketoisovalerate to form ketopantoate. This chain is 3-methyl-2-oxobutanoate hydroxymethyltransferase, found in Chlorobaculum parvum (strain DSM 263 / NCIMB 8327) (Chlorobium vibrioforme subsp. thiosulfatophilum).